The following is a 284-amino-acid chain: D-tagatose-1,6-bisphosphate aldolase subunit GatY (284 aa).

Aspartate 82 serves as the catalytic Proton donor. 2 residues coordinate Zn(2+): histidine 83 and histidine 180. Glycine 181 provides a ligand contact to dihydroxyacetone phosphate. Histidine 208 lines the Zn(2+) pocket. Dihydroxyacetone phosphate is bound by residues 209–211 (GAS) and 230–233 (NVAT).

The protein belongs to the class II fructose-bisphosphate aldolase family. TagBP aldolase GatY subfamily. As to quaternary structure, forms a complex with GatZ. Zn(2+) serves as cofactor.

It carries out the reaction D-tagatofuranose 1,6-bisphosphate = D-glyceraldehyde 3-phosphate + dihydroxyacetone phosphate. It functions in the pathway carbohydrate metabolism; D-tagatose 6-phosphate degradation; D-glyceraldehyde 3-phosphate and glycerone phosphate from D-tagatose 6-phosphate: step 2/2. Functionally, catalytic subunit of the tagatose-1,6-bisphosphate aldolase GatYZ, which catalyzes the reversible aldol condensation of dihydroxyacetone phosphate (DHAP or glycerone-phosphate) with glyceraldehyde 3-phosphate (G3P) to produce tagatose 1,6-bisphosphate (TBP). Requires GatZ subunit for full activity and stability. Is involved in the catabolism of galactitol. The chain is D-tagatose-1,6-bisphosphate aldolase subunit GatY from Escherichia coli O17:K52:H18 (strain UMN026 / ExPEC).